Reading from the N-terminus, the 79-residue chain is Conotoxin VnMKLT1-01121 (79 aa).

Positions 1–22 are cleaved as a signal peptide; the sequence is MKLTCMMIVAVLFLTAWTFVTA. Residues 23 to 48 constitute a propeptide that is removed on maturation; it reads DDSRNGLEYLFPKAHYEMNPEASKLN. 3 disulfides stabilise this stretch: Cys53–Cys70, Cys60–Cys74, and Cys69–Cys78.

This sequence belongs to the conotoxin O1 superfamily. As to expression, expressed by the venom duct.

The protein localises to the secreted. The protein is Conotoxin VnMKLT1-01121 of Conus ventricosus (Mediterranean cone).